The sequence spans 411 residues: Potassium channel subfamily K member 3 (411 aa).

Topologically, residues 1–8 (MKRQNVRT) are cytoplasmic. The chain crosses the membrane as a helical span at residues 9–29 (LALIVCTFTYLLVGAAVFDAL). An N-linked (GlcNAc...) asparagine glycan is attached at Asn-53. The pore-forming intramembrane region spans 78 to 101 (WRFAGSFYFAITVITTIGYGHAAP). Residues 108 to 128 (VFCMFYALLGIPLTLVMFQSL) traverse the membrane as a helical segment. The Cytoplasmic portion of the chain corresponds to 129-158 (GERINTFVRYLLHRAKRGLGMRHAEVSMAN). Residues 159–179 (MVLIGFVSCISTLCIGAAAFS) form a helical membrane-spanning segment. Residues 184 to 207 (WTFFQAYYYCFITLTTIGFGDYVA) constitute an intramembrane region (pore-forming). Residues 223–243 (FSFVYILTGLTVIGAFLNLVV) form a helical membrane-spanning segment. Over 244 to 411 (LRFMTMNAED…RGLMKRRSSV (168 aa)) the chain is Cytoplasmic.

It belongs to the two pore domain potassium channel (TC 1.A.1.8) family. Homodimer. Heterodimer with KCNK1. Heterodimer with KCNK9. Strongest expression in heart. Moderate expression in lung and brain. Low levels in liver, kidney and skeletal muscle. Expressed in cerebellar granule cells (at protein level).

The protein localises to the cell membrane. It catalyses the reaction K(+)(in) = K(+)(out). The catalysed reaction is Na(+)(in) = Na(+)(out). Its activity is regulated as follows. Inhibited by extracellular acidification, muscarinic signaling, divalent metal cations Zn(2+) and Ba(2+), isoflurane, bupivacaine and phenytoin. Activated by protein kinase A. Ruthenium red resistant. Functionally, k(+) channel that conducts voltage-dependent outward rectifying currents upon membrane depolarization. Voltage sensing is coupled to K(+) electrochemical gradient in an 'ion flux gating' mode where outward but not inward ion flow opens the gate. Changes ion selectivity and becomes permeable to Na(+) ions in response to extracellular acidification. Protonation of the pH sensor His-98 stabilizes C-type inactivation conformation likely converting the channel from outward K(+)-conducting, to inward Na(+)-conducting to nonconductive state. Homo- and heterodimerizes to form functional channels with distinct regulatory and gating properties. Allows K(+) currents with fast-gating kinetics important for the repolarization and hyperpolarization phases of action potentials. In cerebellar granule cells, heteromeric KCNK3:KCNK9 channel may hyperpolarize the resting membrane potential to limit intrinsic neuronal excitability, but once the action potential threshold is reached, it may support high-frequency action potential firing and increased neuronal excitability. Dispensable for central chemosensory respiration i.e. breathing controlled by brainstem CO2/pH, it rather conducts pH-sensitive currents and controls the firing rate of serotonergic raphe neurons involved in potentiation of the respiratory chemoreflex. Additionally, imparts chemosensitivity to type 1 cells in carotid bodies which respond to a decrease in arterial oxygen pressure or an increase in carbon dioxide pressure or pH to initiate adaptive changes in pulmonary ventilation. In adrenal gland, contributes to the maintenance of a hyperpolarized resting membrane potential of aldosterone-producing cells at zona glomerulosa and limits aldosterone release as part of a regulatory mechanism that controls arterial blood pressure and electrolyte homeostasis. In brown adipocytes, mediates K(+) efflux that counteracts norepinephrine-induced membrane depolarization, limits Ca(2+) efflux and downstream cAMP and PKA signaling, ultimately attenuating lipid oxidation and adaptive thermogenesis. The chain is Potassium channel subfamily K member 3 from Rattus norvegicus (Rat).